The following is a 106-amino-acid chain: Nucleoid-associated protein RPD_0086 (106 aa).

It belongs to the YbaB/EbfC family. Homodimer.

It is found in the cytoplasm. It localises to the nucleoid. Binds to DNA and alters its conformation. May be involved in regulation of gene expression, nucleoid organization and DNA protection. In Rhodopseudomonas palustris (strain BisB5), this protein is Nucleoid-associated protein RPD_0086.